A 378-amino-acid polypeptide reads, in one-letter code: MKYASFLALVGFITSTSAIGVSGAAEGFAKGVTGGGSATPVYPSTTAELVSYLTDSQPRVIVLTKTFDFTNTEGSTTATGCAPWGTAPGCQLAINQNDWCKNYQSSAPSVSVTYDNAGVLGMTVASDKTLLGSGSSGVIKGKGLRVVSGAKNIIIQNVAITDINPKYVWGGDAITIDNADMVWIDHVTTARIGRQHLVLGTSASNRVTISNSYFNGVSSYSATCDGYHYWGIYLTGSNDLVTMKGNYIHHFSGRSPKIQGNTLLHAVNNYWYDSTGHAFEIGSGGYVLAEGNVFQNIKTIVEPPVGGQLFTSPNSNTNQACSAYLGHVCQVNGFGSSGPFSQADTGLLSKFSGKNVASASAYTVAQSRVPSSAGQGKL.

The first 18 residues, 1-18 (MKYASFLALVGFITSTSA), serve as a signal peptide directing secretion. Disulfide bonds link cysteine 81–cysteine 100 and cysteine 90–cysteine 224. Residue arginine 254 is part of the active site. The cysteines at positions 321 and 329 are disulfide-linked.

Belongs to the polysaccharide lyase 1 family.

Its subcellular location is the secreted. It catalyses the reaction Eliminative cleavage of (1-&gt;4)-alpha-D-galacturonan methyl ester to give oligosaccharides with 4-deoxy-6-O-methyl-alpha-D-galact-4-enuronosyl groups at their non-reducing ends.. Functionally, pectinolytic enzymes consist of four classes of enzymes: pectin lyase, polygalacturonase, pectin methylesterase and rhamnogalacturonase. Among pectinolytic enzymes, pectin lyase is the most important in depolymerization of pectin, since it cleaves internal glycosidic bonds of highly methylated pectins. The polypeptide is Probable pectin lyase A (pelA) (Aspergillus clavatus (strain ATCC 1007 / CBS 513.65 / DSM 816 / NCTC 3887 / NRRL 1 / QM 1276 / 107)).